The chain runs to 1031 residues: Toll-like receptor 9 (1031 aa).

Residues 1-25 (MGPCHGALHPLSLLVQAAALAVALA) form the signal peptide. Topologically, residues 26–817 (QGTLPAFLPC…LCLDEALSWD (792 aa)) are extracellular. Cys35 and Cys45 are joined by a disulfide. 47–51 (WLFLK) provides a ligand contact to DNA. LRR repeat units lie at residues 62-85 (RGNV…DFVH), 87-110 (SSLR…HFPC), 122-147 (VPTL…SLVS), 150-166 (LSRT…LAGL), 167-190 (HSLR…ALQV), 198-221 (LGNL…LPPS), 223-242 (EYLL…DLAN), 243-268 (LTAL…CMEC), 283-306 (LNHL…WFHA), 308-332 (GNLM…AFQG), 333-356 (LAQL…HLHL), 363-386 (LLSL…TLRS), 390-413 (LPML…IFGA), 415-440 (PGLR…TGEV), 470-494 (CKTL…MFAR), 496-519 (SRLQ…QFMP), 520-543 (LTSL…SFTE), 545-572 (PRLE…SFVA), 574-598 (LPAL…LCSA), 600-622 (LRAL…LYLH), 627-650 (LRSL…TLDN), 652-675 (PKSL…SLVL), 676-699 (LPRL…SLPN), 701-723 (TQLQ…FFAL), 724-747 (ATRL…WFGS), and 749-772 (AGTL…AFVD). Asn64 carries an N-linked (GlcNAc...) asparagine glycan. DNA-binding positions include 72 to 77 (SNRIHH) and 95 to 109 (KWNC…MHFP). Cys98 and Cys110 are joined by a disulfide. The N-linked (GlcNAc...) asparagine glycan is linked to Asn129. Residues Tyr132, Arg152, and 179 to 181 (YYK) each bind DNA. Cys178 and Cys184 are oxidised to a cystine. The N-linked (GlcNAc...) asparagine glycan is linked to Asn200. A DNA-binding site is contributed by Tyr208. 2 N-linked (GlcNAc...) asparagine glycosylation sites follow: Asn210 and Asn242. Cystine bridges form between Cys255-Cys268 and Cys258-Cys265. Residue Cys258 is the site of S-palmitoyl cysteine attachment. A DNA-binding site is contributed by Arg262. Cys265 carries S-palmitoyl cysteine lipidation. Residue Asn340 is glycosylated (N-linked (GlcNAc...) asparagine). Residues Cys470 and Cys500 are joined by a disulfide bond. N-linked (GlcNAc...) asparagine glycosylation is found at Asn474 and Asn513. A glycan (N-linked (GlcNAc...) asparagine) is linked at Asn567. N-linked (GlcNAc...) asparagine glycans are attached at residues Asn669, Asn694, and Asn699. Asn731 carries N-linked (GlcNAc...) asparagine glycosylation. Cystine bridges form between Cys764/Cys790 and Cys766/Cys809. The helical transmembrane segment at 818 to 838 (CFGLSLLTVALGLAVPMLHHL) threads the bilayer. The Cytoplasmic segment spans residues 839–1031 (CGWDLWYCFH…NFCRGPTTAE (193 aa)). The TIR domain maps to 866–1011 (LPYDAFVVFD…SFWAQLGTAL (146 aa)).

This sequence belongs to the Toll-like receptor family. Monomer and homodimer. Exists as a monomer in the absence of unmethylated cytidine-phosphate-guanosine (CpG) ligand. Proteolytic processing of an insertion loop (Z-loop) is required for homodimerization upon binding to the unmethylated CpG ligand leading to its activation. Interacts with MYD88 via their respective TIR domains. Interacts with BTK. Interacts (via transmembrane domain) with UNC93B1. Interacts with CD300LH; the interaction may promote full activation of TLR9-triggered innate responses. Interacts with CNPY3 and HSP90B1; this interaction is required for proper folding in the endoplasmic reticulum. Interacts with SMPDL3B. Interacts with CD82; this interaction is essential for TLR9-dependent myddosome formation in response to CpG stimulation. In terms of processing, activated by proteolytic cleavage of the flexible loop between repeats LRR14 and LRR15 within the ectodomain. Cleavage requires UNC93B1. Proteolytically processed by first removing the majority of the ectodomain by either asparagine endopeptidase (AEP) or a cathepsin followed by a trimming event that is solely cathepsin mediated and required for optimal receptor signaling. Post-translationally, palmitoylated by ZDHHC3 in the Golgi regulates TLR9 trafficking from the Golgi to endosomes. Depalmitoylation by PPT1 controls the release of TLR9 from UNC93B1 in endosomes.

The protein localises to the endoplasmic reticulum membrane. It is found in the endosome. It localises to the lysosome. Its subcellular location is the cytoplasmic vesicle. The protein resides in the phagosome. In terms of biological role, key component of innate and adaptive immunity. TLRs (Toll-like receptors) control host immune response against pathogens through recognition of molecular patterns specific to microorganisms. TLR9 is a nucleotide-sensing TLR which is activated by unmethylated cytidine-phosphate-guanosine (CpG) dinucleotides. Acts via MYD88 and TRAF6, leading to NF-kappa-B activation, cytokine secretion and the inflammatory response. Upon CpG stimulation, induces B-cell proliferation, activation, survival and antibody production. This is Toll-like receptor 9 (TLR9) from Felis catus (Cat).